Consider the following 321-residue polypeptide: Phosphate acyltransferase (321 aa).

The protein belongs to the PlsX family. In terms of assembly, homodimer. Probably interacts with PlsY.

Its subcellular location is the cytoplasm. It catalyses the reaction a fatty acyl-[ACP] + phosphate = an acyl phosphate + holo-[ACP]. Its pathway is lipid metabolism; phospholipid metabolism. Functionally, catalyzes the reversible formation of acyl-phosphate (acyl-PO(4)) from acyl-[acyl-carrier-protein] (acyl-ACP). This enzyme utilizes acyl-ACP as fatty acyl donor, but not acyl-CoA. This chain is Phosphate acyltransferase, found in Chlamydia trachomatis serovar A (strain ATCC VR-571B / DSM 19440 / HAR-13).